The chain runs to 100 residues: Urease subunit gamma (100 aa).

Belongs to the urease gamma subunit family. Heterotrimer of UreA (gamma), UreB (beta) and UreC (alpha) subunits. Three heterotrimers associate to form the active enzyme.

The protein resides in the cytoplasm. The catalysed reaction is urea + 2 H2O + H(+) = hydrogencarbonate + 2 NH4(+). Its pathway is nitrogen metabolism; urea degradation; CO(2) and NH(3) from urea (urease route): step 1/1. The polypeptide is Urease subunit gamma (Staphylococcus saprophyticus subsp. saprophyticus (strain ATCC 15305 / DSM 20229 / NCIMB 8711 / NCTC 7292 / S-41)).